Here is a 233-residue protein sequence, read N- to C-terminus: MDGRLPDKGILKSEALKQYIMETTAYPREHELLKELREATIQRYGNLSEMGVPVDESLFLSMLVKIINAKNTIEIGVFTGYSLFTVALALPEDGRITAIDIDQAGYNLGLEFMKKAGVDHKINFIQSDAVRGLDQLLNGEKQEYDFAFVDADKTNYVYFLEKLLKLVKVGGIIAFDNTLWFGTLIQKENEVPGHMRAYREALLEFNKILARDPRVEIAQISIGDGLTLCRRLI.

Residue K8 participates in substrate binding. Residues V52, E74, 76–77 (GV), S82, D100, and A129 each bind S-adenosyl-L-methionine. D150 contributes to the substrate binding site. D150 contributes to the a divalent metal cation binding site. D152 lines the S-adenosyl-L-methionine pocket. The a divalent metal cation site is built by D176 and N177.

It belongs to the class I-like SAM-binding methyltransferase superfamily. Cation-dependent O-methyltransferase family. CCoAMT subfamily. The cofactor is a divalent metal cation. Expressed in inflorescences and flower buds. Not detected in roots, leaves or stems. Located exclusively in the tapetum of developing stamen.

It functions in the pathway aromatic compound metabolism; phenylpropanoid biosynthesis. Methyltransferase involved in phenylpropanoid polyamine conjugate biosynthesis. In vivo, methylates only one of the 5-hydroxyferuloyl moieties of N1,N5,N10-tri-(hydroxyferuloyl)-spermidine, while is able in vitro to convert all three 5-hydroxyferuloyl residues to the corresponding sinapoyl moieties and to methylate caffeoyl CoA and tricaffeoyl spermidine. This Arabidopsis thaliana (Mouse-ear cress) protein is Tapetum-specific methyltransferase 1 (TSM1).